The chain runs to 526 residues: Dolichyl pyrophosphate Glc1Man9GlcNAc2 alpha-1,3-glucosyltransferase (526 aa).

11 consecutive transmembrane segments (helical) span residues 9 to 29 (AGGH…CLLI), 108 to 128 (FSVI…CKCI), 143 to 163 (FILS…HIHF), 188 to 208 (GALL…VAPA), 238 to 258 (VTSL…PFLA), 334 to 354 (PLAT…CLWF), 361 to 380 (GFLR…GWHV), 400 to 422 (AGDA…PLLF), 427 to 449 (LPIK…KTLF), 461 to 481 (TVYL…LPFT), and 487 to 507 (YPFI…TYAW).

This sequence belongs to the ALG6/ALG8 glucosyltransferase family.

Its subcellular location is the endoplasmic reticulum membrane. It catalyses the reaction an alpha-D-Glc-(1-&gt;3)-alpha-D-Man-(1-&gt;2)-alpha-D-Man-(1-&gt;2)-alpha-D-Man-(1-&gt;3)-[alpha-D-Man-(1-&gt;2)-alpha-D-Man-(1-&gt;3)-[alpha-D-Man-(1-&gt;2)-alpha-D-Man-(1-&gt;6)]-alpha-D-Man-(1-&gt;6)]-beta-D-Man-(1-&gt;4)-beta-D-GlcNAc-(1-&gt;4)-alpha-D-GlcNAc-diphospho-di-trans,poly-cis-dolichol + a di-trans,poly-cis-dolichyl beta-D-glucosyl phosphate = an alpha-D-Glc-(1-&gt;3)-alpha-D-Glc-(1-&gt;3)-alpha-D-Man-(1-&gt;2)-alpha-D-Man-(1-&gt;2)-alpha-D-Man-(1-&gt;3)-[alpha-D-Man-(1-&gt;2)-alpha-D-Man-(1-&gt;3)-[alpha-D-Man-(1-&gt;2)-alpha-D-Man-(1-&gt;6)]-alpha-D-Man-(1-&gt;6)]-beta-D-Man-(1-&gt;4)-beta-D-GlcNAc-(1-&gt;4)-alpha-D-GlcNAc-diphospho-di-trans,poly-cis-dolichol + a di-trans,poly-cis-dolichyl phosphate + H(+). It participates in protein modification; protein glycosylation. Functionally, dolichyl pyrophosphate Glc1Man9GlcNAc2 alpha-1,3-glucosyltransferase that operates in the biosynthetic pathway of dolichol-linked oligosaccharides, the glycan precursors employed in protein asparagine (N)-glycosylation. The assembly of dolichol-linked oligosaccharides begins on the cytosolic side of the endoplasmic reticulum membrane and finishes in its lumen. The sequential addition of sugars to dolichol pyrophosphate produces dolichol-linked oligosaccharides containing fourteen sugars, including two GlcNAcs, nine mannoses and three glucoses. Once assembled, the oligosaccharide is transferred from the lipid to nascent proteins by oligosaccharyltransferases. In the lumen of the endoplasmic reticulum, adds the second glucose residue from dolichyl phosphate glucose (Dol-P-Glc) onto the lipid-linked oligosaccharide intermediate Glc(1)Man(9)GlcNAc(2)-PP-Dol to produce Glc(2)Man(9)GlcNAc(2)-PP-Dol. Glc(2)Man(9)GlcNAc(2)-PP-Dol is a substrate for ALG10, the following enzyme in the biosynthetic pathway. Required for PKD1/Polycystin-1 maturation and localization to the plasma membrane of the primary cilia. This chain is Dolichyl pyrophosphate Glc1Man9GlcNAc2 alpha-1,3-glucosyltransferase, found in Mus musculus (Mouse).